We begin with the raw amino-acid sequence, 426 residues long: Colanic acid biosynthesis protein WcaK (426 aa).

The protein belongs to the polysaccharide pyruvyl transferase family.

The protein operates within slime biogenesis; slime polysaccharide biosynthesis. The polypeptide is Colanic acid biosynthesis protein WcaK (wcaK) (Escherichia coli (strain K12)).